The primary structure comprises 162 residues: AP-1 complex subunit sigma-2 (162 aa).

This sequence belongs to the adaptor complexes small subunit family. As to quaternary structure, adaptor protein complex 1 (AP-1) is a heterotetramer composed of two large adaptins (gamma-type subunit and beta-type subunit), a medium adaptin (mu-type subunit) and a small adaptin (sigma-type subunit). In terms of tissue distribution, expressed in roots, stems, leaves, flowers and siliques (developing fruits and seeds).

Its subcellular location is the golgi apparatus. The protein localises to the cytoplasmic vesicle. It localises to the clathrin-coated vesicle membrane. Its function is as follows. Subunit of clathrin-associated adaptor protein complex 1 that plays a role in protein sorting at the trans-Golgi network and early endosomes (TGN/EE). The AP complexes mediate the recruitment of clathrin to membranes and the recognition of sorting signals within the cytosolic tails of transmembrane cargo molecules. The protein is AP-1 complex subunit sigma-2 (AAP19-2) of Arabidopsis thaliana (Mouse-ear cress).